A 387-amino-acid polypeptide reads, in one-letter code: Alpha-maltose-1-phosphate synthase (387 aa).

This sequence belongs to the glycosyltransferase group 1 family.

The enzyme catalyses ADP-alpha-D-glucose + alpha-D-glucose 1-phosphate = alpha-maltose 1-phosphate + ADP + H(+). It participates in glycan biosynthesis; glycogen biosynthesis. Involved in the biosynthesis of the maltose-1-phosphate (M1P) building block required for alpha-glucan production by the key enzyme GlgE. Catalyzes the formation of an alpha-1,4 linkage between glucose from ADP-glucose and glucose 1-phosphate (G1P) to yield maltose-1-phosphate (M1P). The polypeptide is Alpha-maltose-1-phosphate synthase (Mycolicibacterium smegmatis (strain ATCC 700084 / mc(2)155) (Mycobacterium smegmatis)).